Reading from the N-terminus, the 312-residue chain is Olfactory receptor 52A1 (312 aa).

At 1-27 (MSISNITVYMPSVLTLVGIPGLESVQC) the chain is on the extracellular side. N-linked (GlcNAc...) asparagine glycosylation occurs at Asn-5. Residues 28–48 (WIGIPFCAIYLIAMIGNSLLL) form a helical membrane-spanning segment. At 49–56 (SIIKSERS) the chain is on the cytoplasmic side. The helical transmembrane segment at 57–77 (LHEPLYIFLGMLGATDIALAS) threads the bilayer. At 78–101 (SIMPKMLGIFWFNVPEIYFDSCLL) the chain is on the extracellular side. An intrachain disulfide couples Cys-99 to Cys-182. A helical membrane pass occupies residues 102-122 (QMWFIHTLQGIESGILVAMAL). At 123–141 (DRYVAICYPLRHANIFTHQ) the chain is on the cytoplasmic side. A helical membrane pass occupies residues 142 to 162 (LVIQIGTMVVLRAAILVAPCL). The Extracellular segment spans residues 163 to 199 (VLIKCRFQFYHTTVISHSYCEHMAIVKLAAANVQVNK). A helical membrane pass occupies residues 200-220 (IYGLFVAFTVAGFDLTFITLS). The Cytoplasmic segment spans residues 221–240 (YIQIFITVFRLPQKEARFKA). A helical membrane pass occupies residues 241–261 (FNTCIAHICVFLQFYLLAFFS). Topologically, residues 262–276 (FFTHRFGSHISPYIH) are extracellular. The chain crosses the membrane as a helical span at residues 277–297 (ILFSSIYLLVPPFLNPLVYGA). The Cytoplasmic segment spans residues 298–312 (KTTQIRIHVVKMFCS).

Belongs to the G-protein coupled receptor 1 family.

The protein localises to the cell membrane. In terms of biological role, odorant receptor. This is Olfactory receptor 52A1 (OR52A1) from Homo sapiens (Human).